Here is a 41-residue protein sequence, read N- to C-terminus: Large ribosomal subunit protein bL36 (41 aa).

This sequence belongs to the bacterial ribosomal protein bL36 family.

This is Large ribosomal subunit protein bL36 from Bradyrhizobium diazoefficiens (strain JCM 10833 / BCRC 13528 / IAM 13628 / NBRC 14792 / USDA 110).